The primary structure comprises 697 residues: Methionine--tRNA ligase (697 aa).

The 'HIGH' region motif lies at proline 11–histidine 21. Zn(2+) is bound by residues cysteine 142, cysteine 145, cysteine 155, and cysteine 158. The short motif at lysine 343–serine 347 is the 'KMSKS' region element. An ATP-binding site is contributed by lysine 346. Residues aspartate 595 to alanine 697 form the tRNA-binding domain.

It belongs to the class-I aminoacyl-tRNA synthetase family. MetG type 1 subfamily. Homodimer. Requires Zn(2+) as cofactor.

The protein localises to the cytoplasm. It carries out the reaction tRNA(Met) + L-methionine + ATP = L-methionyl-tRNA(Met) + AMP + diphosphate. In terms of biological role, is required not only for elongation of protein synthesis but also for the initiation of all mRNA translation through initiator tRNA(fMet) aminoacylation. This Psychrobacter sp. (strain PRwf-1) protein is Methionine--tRNA ligase.